We begin with the raw amino-acid sequence, 670 residues long: Solute carrier organic anion transporter family member 1A5 (670 aa).

The Cytoplasmic portion of the chain corresponds to 1 to 20; the sequence is MGETEKRVATHEVRCFSKIK. The chain crosses the membrane as a helical span at residues 21 to 40; it reads MFLLALTWAYVSKSLSGIYM. The Extracellular portion of the chain corresponds to 41–59; sequence NTMLTQIERQFDIPTSIVG. Residues 60 to 80 traverse the membrane as a helical segment; sequence FINGSFEIGNLLLIIFVSYFG. The Cytoplasmic portion of the chain corresponds to 81–86; sequence TKLHRP. A helical membrane pass occupies residues 87 to 111; that stretch reads IMIGVGCVIMGLGCFLMSLPHFLMG. Topologically, residues 112–155 are extracellular; sequence RYEYETTISPTSNLSSNSFLCMENRSQTLKPTQDPAECIKEMKS. N-linked (GlcNAc...) asparagine glycosylation is found at Asn-124 and Asn-135. A helical membrane pass occupies residues 156–184; sequence LMWIYVLVGNIIRGIGETPIMPLGISYIE. Topologically, residues 185–203 are cytoplasmic; sequence DFAKSENSPLYIGILETGK. A helical membrane pass occupies residues 204–224; it reads VFGPIVGLLLGSFCASIYVDT. The Extracellular segment spans residues 225–242; that stretch reads GSVNTDDLTITPTDTRWV. Residues 243–267 form a helical membrane-spanning segment; that stretch reads GAWWIGFLICAGVNILSSIPFFFFP. The Cytoplasmic portion of the chain corresponds to 268 to 311; the sequence is KTLPKEGLQDDVDGTNNDKEEKHREKAKEENRGITKDFLPFMKS. A helical transmembrane segment spans residues 312–333; sequence LSCNPIYMLLILTSVLQINAFI. Over 334–353 the chain is Extracellular; the sequence is NMFTFLPKYLEQQYGKSTAE. The helical transmembrane segment at 354–377 threads the bilayer; that stretch reads VVLLIGVYNLPPICIGYLLIGFIM. The Cytoplasmic portion of the chain corresponds to 378-381; the sequence is KKFK. A helical membrane pass occupies residues 382-405; the sequence is ITVKKAAYMAFCLSLFEYLLYFLH. Residues 406–513 lie on the Extracellular side of the membrane; the sequence is FMITCDNFPV…PECANKLQYF (108 aa). The 56-residue stretch at 433–488 folds into the Kazal-like domain; the sequence is NKVLADCNRGCSCSTNSWDPVCGDNGLAYMSACLAGCKKSVGTGTNMVFQNCSCIR. 3 cysteine pairs are disulfide-bonded: Cys-439–Cys-469, Cys-445–Cys-465, and Cys-454–Cys-486. Residues Asn-483 and Asn-492 are each glycosylated (N-linked (GlcNAc...) asparagine). The chain crosses the membrane as a helical span at residues 514–536; the sequence is LIMSVIGSFIYSITAIPGYMVLL. Residues 537–545 lie on the Cytoplasmic side of the membrane; the sequence is RCIKPEEKS. The helical transmembrane segment at 546–571 threads the bilayer; that stretch reads LGIGLHAFCTRVFAGIPAPIYFGALI. At 572 to 605 the chain is on the extracellular side; it reads DRTCLHWGTLKCGEPGACRMYNINNFRRIYLVLP. Residues 606-623 form a helical membrane-spanning segment; it reads AALRGSSYLPALFILILM. The Cytoplasmic segment spans residues 624–670; the sequence is RKFQFPGEIDSSETELAEMKITVKKSECTDVHGSPQVENDGELKTRL.

Belongs to the organo anion transporter (TC 2.A.60) family. In terms of tissue distribution, highly expressed in the kidney, moderately abundant in the retina, and even lower in the liver. Expressed (at protein level) in the small intestine. Expressed at lower levels in brain,lung, and retina.

It localises to the cell membrane. The protein localises to the basal cell membrane. The catalysed reaction is taurocholate(out) = taurocholate(in). The enzyme catalyses glycocholate(out) = glycocholate(in). It carries out the reaction taurochenodeoxycholate(out) = taurochenodeoxycholate(in). It catalyses the reaction tauroursodeoxycholate(out) = tauroursodeoxycholate(in). The catalysed reaction is 3,3',5'-triiodo-L-thyronine(out) = 3,3',5'-triiodo-L-thyronine(in). The enzyme catalyses L-thyroxine(out) = L-thyroxine(in). It carries out the reaction taurodeoxycholate(out) = taurodeoxycholate(in). It catalyses the reaction glycodeoxycholate(out) = glycodeoxycholate(in). The catalysed reaction is glycochenodeoxycholate(out) = glycochenodeoxycholate(in). The enzyme catalyses glycoursodeoxycholate(out) = glycoursodeoxycholate(in). It carries out the reaction estrone 3-sulfate(out) = estrone 3-sulfate(in). It catalyses the reaction prostaglandin E2(out) = prostaglandin E2(in). The catalysed reaction is substance P(out) = substance P(in). Na(+)-independent transporter that mediates the cellular uptake of a broad range of organic anions such as the endogenous bile salts cholate and deoxycholate, either in their unconjugated or conjugated forms (taurocholate and glycocholate), estrone 3-sulfate and prostaglandin E2, at the plasma membrane. Responsible for intestinal absorption of bile acids. Capable of thyroid hormone transport (both T3 or 3,3',5'-triiodo-L-thyronine, and T4 or L-tyroxine). Plays roles in blood-brain and -cerebrospinal fluid barrier transport of organic anions and signal mediators, and in hormone uptake by neural cells. May also play a role in the reuptake of neuropeptides such as substance P/TAC1 and vasoactive intestinal peptide/VIP released from retinal neurons. Shows a pH-sensitive substrate specificity which may be ascribed to the protonation state of the binding site and leads to a stimulation of substrate transport in an acidic microenvironment. Hydrogencarbonate/HCO3(-) acts as the probable counteranion that exchanges for organic anions. May contribute to regulate the transport of organic compounds in testis across the blood-testis-barrier. This is Solute carrier organic anion transporter family member 1A5 (Slco1a5) from Rattus norvegicus (Rat).